The primary structure comprises 239 residues: Large ribosomal subunit protein uL2 (239 aa).

Belongs to the universal ribosomal protein uL2 family.

The protein resides in the cytoplasm. This is Large ribosomal subunit protein uL2 (RPL8) from Encephalitozoon cuniculi (strain GB-M1) (Microsporidian parasite).